We begin with the raw amino-acid sequence, 313 residues long: Cytochrome c biogenesis protein CcsA (313 aa).

8 helical membrane passes run 9 to 29 (ILTHISFSIVSIVITIHLITF), 44 to 64 (GIIVTFFCITGLLVTRWISSG), 71 to 91 (LYESLIFLSWSFSLIHIIPYF), 111 to 131 (GFATSGILTEIHQSGILVPAL), 143 to 163 (MILGYAALLCGSLLSVALLVI), 217 to 237 (VISLGFTFLTIGILSGAVWAN), 244 to 264 (WNWDPKETWAFITWIVFAIYL), and 278 to 298 (AIVASIGFLIIWICYFGVNLL).

Belongs to the CcmF/CycK/Ccl1/NrfE/CcsA family. May interact with Ccs1.

It localises to the plastid. Its subcellular location is the chloroplast thylakoid membrane. Its function is as follows. Required during biogenesis of c-type cytochromes (cytochrome c6 and cytochrome f) at the step of heme attachment. The polypeptide is Cytochrome c biogenesis protein CcsA (Solanum bulbocastanum (Wild potato)).